A 481-amino-acid chain; its full sequence is Cobyric acid synthase (481 aa).

The GATase cobBQ-type domain occupies 249–436 (GLHIVCLRLS…LHGMFRDDAF (188 aa)). Cysteine 331 (nucleophile) is an active-site residue. Residue histidine 428 is part of the active site.

This sequence belongs to the CobB/CobQ family. CobQ subfamily.

The protein operates within cofactor biosynthesis; adenosylcobalamin biosynthesis. Its function is as follows. Catalyzes amidations at positions B, D, E, and G on adenosylcobyrinic A,C-diamide. NH(2) groups are provided by glutamine, and one molecule of ATP is hydrogenolyzed for each amidation. This is Cobyric acid synthase from Jannaschia sp. (strain CCS1).